The sequence spans 623 residues: DNA-directed RNA polymerase subunit beta' (623 aa).

Cys-70, Cys-72, Cys-85, and Cys-88 together coordinate Zn(2+). Positions 466, 468, and 470 each coordinate Mg(2+).

It belongs to the RNA polymerase beta' chain family. RpoC1 subfamily. In plastids the minimal PEP RNA polymerase catalytic core is composed of four subunits: alpha, beta, beta', and beta''. When a (nuclear-encoded) sigma factor is associated with the core the holoenzyme is formed, which can initiate transcription. Mg(2+) is required as a cofactor. The cofactor is Zn(2+).

The protein resides in the plastid. It is found in the chloroplast. It catalyses the reaction RNA(n) + a ribonucleoside 5'-triphosphate = RNA(n+1) + diphosphate. DNA-dependent RNA polymerase catalyzes the transcription of DNA into RNA using the four ribonucleoside triphosphates as substrates. The sequence is that of DNA-directed RNA polymerase subunit beta' from Guillardia theta (Cryptophyte).